The sequence spans 227 residues: Glutathione S-transferase U27 (227 aa).

The GST N-terminal domain occupies 4–84; it reads EEVVVLNFWP…YIDEVWKDDK (81 aa). Glutathione contacts are provided by residues 14 to 15, 41 to 42, 55 to 56, and 68 to 69; these read SM, QK, KI, and ES. The region spanning 92 to 217 is the GST C-terminal domain; sequence DPYQKSQCRF…LKIFDRVTQI (126 aa).

Belongs to the GST superfamily. Tau family.

The protein resides in the cytoplasm. Its subcellular location is the cytosol. It carries out the reaction RX + glutathione = an S-substituted glutathione + a halide anion + H(+). Its function is as follows. May be involved in the conjugation of reduced glutathione to a wide number of exogenous and endogenous hydrophobic electrophiles and have a detoxification role against certain herbicides. The sequence is that of Glutathione S-transferase U27 (GSTU27) from Arabidopsis thaliana (Mouse-ear cress).